We begin with the raw amino-acid sequence, 463 residues long: Protein phosphatase PP2A regulatory subunit B (463 aa).

WD repeat units follow at residues 27-66 (TEADIISAVEFDHTGDYLATGDKGGRVVLFERNHSKKGCE) and 87-128 (EIEE…LKVV). Ser-134 bears the Phosphoserine mark. WD repeat units follow at residues 174-212 (AHAYHINSISVNSDAETYISADDLRINLWNLSISDHSFN), 223-263 (ELTE…LCDN), 282-320 (EIISSISDVKFSQNGRYILSRDYLTLKIWDVNMEKAPVK), and 337-378 (ENDC…PGDR).

The protein belongs to the phosphatase 2A regulatory subunit B family. In terms of assembly, PP2A exists in several trimeric forms, all of which consist of a core composed of a catalytic subunit associated with a 65 kDa (PR65) (Subunit A) and a 55 kDa (PR55) (Subunit B) regulatory subunit.

Functionally, phosphatase 2A affects a variety of biological processes in the cell such as transcription, cell cycle progression and cellular morphogenesis, and provides an initial identification of critical substrates for this phosphatase. The regulatory subunit may direct the catalytic subunit to distinct, albeit overlapping, subsets of substrates. This chain is Protein phosphatase PP2A regulatory subunit B (pab1), found in Schizosaccharomyces pombe (strain 972 / ATCC 24843) (Fission yeast).